Reading from the N-terminus, the 210-residue chain is Secreted isochorismatase effector Isc1 (210 aa).

Catalysis depends on residues D25, K90, and C124.

This sequence belongs to the isochorismatase family.

The protein localises to the secreted. The protein resides in the host cytoplasm. It localises to the host nucleus. It carries out the reaction isochorismate + H2O = (2S,3S)-2,3-dihydroxy-2,3-dihydrobenzoate + pyruvate. Secreted isochorismatase required for full virulence of P.sojae. Suppresses salicylate-mediated innate immunity of the host by disrupting the plant salicylate metabolism pathway via hydrolysis of its isochorismate precursor. In Phytophthora sojae (strain P6497) (Soybean stem and root rot agent), this protein is Secreted isochorismatase effector Isc1.